Consider the following 310-residue polypeptide: MRLISKVLVKTNCLEVGMRRAPQWYSHYSTTAGNARVNKKGSKVVPVLTGLALASIFAKKWYDDSQIKKADATSVAVDASISAFPKKMGPPQWPFSTQYELIGKGVRCVSSITFKAYGLGIYVAAEDKHLVSEVLDSKFLSQAFIDTAAPPSPENSHQDNLRTALNDPAKAPILINNLLDSGIRLMSKNTPIKAGSFKLLMDGTKKSVLKNPDSQSQDKDRLEAGFQELHDCFRSVKGLVARDDDFFIELNKDCSMNLSYYARKKDEFVILGTVKEPLIGKLLFAHYLAAVDPPSPEARKEVIDALVSLS.

Residues 1–20 (MRLISKVLVKTNCLEVGMRR) constitute a mitochondrion transit peptide.

The protein belongs to the AIM18/AIM46 family.

The protein localises to the mitochondrion. This chain is Altered inheritance of mitochondria protein 46, mitochondrial (AIM46), found in Saccharomyces cerevisiae (strain JAY291) (Baker's yeast).